The sequence spans 783 residues: MSDVLSNDLLQKMDAYWRAANYLSVGQIYLQDNPLLDQKLQLDHIKPRLLGHWGTTPGLNLLYVHLNRLITEHDLDMIYITGPGHGGPGLVANAYLEGTYTERYPAIERSRNGMQRLFRQFSWPHGVPSHVSPETPGSIHEGGELGYSLAHAYGAAFDNPNLIVACVVGDGEAETGALATSWHSNKFLNPARDGAVLPILHLNGFKIANPTVLARITPQELTDLMRGYGYEPHFVEGDDPAVVHQTLAATLERVLGEIRAIQDKARNHGDTERPRWPMIVMRTPKGWTGPKQVDGKPVEGTWRAHQVPIADFKNPEHLTLLEDWMRSYRPDELFDATGKLRDELQALAPTGRRRMSANPHANGGELLEPLSLPDFHDYAVTLTGPGALKAEATRVLGTFLRDVMKNSLESENFRLFGPDETASNRLDAVLQVSPKEWMAAIEDVDVDLSPDGRVMEVLSEHLCQGWLEGYLLTGRHGFFSCYEAFIHIIDSMFNQHAKWLKACATIPWRKPIASLNYLLTSHVWRQDHNGFSHQDPGFIDHVANKKSNVVRIYLPPDANCLLSVADHCLRSRNYVNLIVAGKQPEWQWLDIDAAVRHCTTGAGIWHWASDEGEPDVVMACAGDVPTVETLAAVKLLREYVPDIKIRVVNVVDLMVLQPSSEHPHGLDDRRFDELFTTDKPVIFAFHGYPWLIHRLTYRRRNHVNIHVRGYKEEGTTTTPFDMVVLNDLDRYRLALDAILRIPRLADQRDAATSRYWATMQRHKLYIGEHGDDLPEVRDWRWSA.

The protein belongs to the XFP family. It depends on thiamine diphosphate as a cofactor.

This Rhodopseudomonas palustris (strain ATCC BAA-98 / CGA009) protein is Probable phosphoketolase.